The following is a 327-amino-acid chain: Aspartate--ammonia ligase (327 aa).

The protein belongs to the class-II aminoacyl-tRNA synthetase family. AsnA subfamily.

The protein resides in the cytoplasm. It catalyses the reaction L-aspartate + NH4(+) + ATP = L-asparagine + AMP + diphosphate + H(+). It functions in the pathway amino-acid biosynthesis; L-asparagine biosynthesis; L-asparagine from L-aspartate (ammonia route): step 1/1. This chain is Aspartate--ammonia ligase, found in Bacillus cytotoxicus (strain DSM 22905 / CIP 110041 / 391-98 / NVH 391-98).